The sequence spans 245 residues: Ribonuclease 3 (245 aa).

The 130-residue stretch at 19 to 148 (FKVFQEKIGI…FIGALYLDQG (130 aa)) folds into the RNase III domain. Mg(2+) is bound at residue Glu-61. Asp-65 is a catalytic residue. Mg(2+)-binding residues include Asp-134 and Glu-137. Glu-137 is a catalytic residue. The DRBM domain maps to 174–243 (DYKSQLQELI…AAEALKKLKE (70 aa)).

The protein belongs to the ribonuclease III family. Homodimer. Mg(2+) is required as a cofactor.

The protein resides in the cytoplasm. It catalyses the reaction Endonucleolytic cleavage to 5'-phosphomonoester.. Functionally, digests double-stranded RNA. Involved in the processing of primary rRNA transcript to yield the immediate precursors to the large and small rRNAs (23S and 16S). Processes some mRNAs, and tRNAs when they are encoded in the rRNA operon. Processes pre-crRNA and tracrRNA of type II CRISPR loci if present in the organism. The polypeptide is Ribonuclease 3 (Bacillus cereus (strain ZK / E33L)).